We begin with the raw amino-acid sequence, 248 residues long: Adenosylcobinamide-GDP ribazoletransferase (248 aa).

6 helical membrane passes run 36–56 (FFLPVVAFIIGGMEFLIYLAL), 59–79 (FLPPNVIIVLLILFTAMITGG), 114–134 (GTIALIIDLLLKYQLLYSLVL), 137–157 (YSIAIVLAPIIGRISILFLCL), 170–190 (IFIGNMSKPIIFFITTIVLAL), and 199–219 (ATIIPFIGVLLITYLLYLLCL).

It belongs to the CobS family. Mg(2+) serves as cofactor.

It localises to the cell membrane. The enzyme catalyses alpha-ribazole + adenosylcob(III)inamide-GDP = adenosylcob(III)alamin + GMP + H(+). It carries out the reaction alpha-ribazole 5'-phosphate + adenosylcob(III)inamide-GDP = adenosylcob(III)alamin 5'-phosphate + GMP + H(+). It functions in the pathway cofactor biosynthesis; adenosylcobalamin biosynthesis; adenosylcobalamin from cob(II)yrinate a,c-diamide: step 7/7. Joins adenosylcobinamide-GDP and alpha-ribazole to generate adenosylcobalamin (Ado-cobalamin). Also synthesizes adenosylcobalamin 5'-phosphate from adenosylcobinamide-GDP and alpha-ribazole 5'-phosphate. This is Adenosylcobinamide-GDP ribazoletransferase from Clostridium botulinum (strain Okra / Type B1).